Reading from the N-terminus, the 107-residue chain is YcgL domain-containing protein Pcryo_0807 (107 aa).

Residues Met1–Leu95 enclose the YcgL domain.

This chain is YcgL domain-containing protein Pcryo_0807, found in Psychrobacter cryohalolentis (strain ATCC BAA-1226 / DSM 17306 / VKM B-2378 / K5).